A 122-amino-acid polypeptide reads, in one-letter code: Small ribosomal subunit protein uS13 (122 aa).

Residues 94 to 122 (RGLPVRGQRTKTNARQRKGPRPAIGGRKK) form a disordered region.

This sequence belongs to the universal ribosomal protein uS13 family. In terms of assembly, part of the 30S ribosomal subunit. Forms a loose heterodimer with protein S19. Forms two bridges to the 50S subunit in the 70S ribosome.

In terms of biological role, located at the top of the head of the 30S subunit, it contacts several helices of the 16S rRNA. In the 70S ribosome it contacts the 23S rRNA (bridge B1a) and protein L5 of the 50S subunit (bridge B1b), connecting the 2 subunits; these bridges are implicated in subunit movement. Contacts the tRNAs in the A and P-sites. This is Small ribosomal subunit protein uS13 from Rubrobacter xylanophilus (strain DSM 9941 / JCM 11954 / NBRC 16129 / PRD-1).